The primary structure comprises 236 residues: 2,3,4,5-tetrahydropyridine-2,6-dicarboxylate N-acetyltransferase (236 aa).

The protein belongs to the transferase hexapeptide repeat family. DapH subfamily.

The enzyme catalyses (S)-2,3,4,5-tetrahydrodipicolinate + acetyl-CoA + H2O = L-2-acetamido-6-oxoheptanedioate + CoA. Its pathway is amino-acid biosynthesis; L-lysine biosynthesis via DAP pathway; LL-2,6-diaminopimelate from (S)-tetrahydrodipicolinate (acetylase route): step 1/3. Its function is as follows. Catalyzes the transfer of an acetyl group from acetyl-CoA to tetrahydrodipicolinate. The protein is 2,3,4,5-tetrahydropyridine-2,6-dicarboxylate N-acetyltransferase of Clostridium beijerinckii (strain ATCC 51743 / NCIMB 8052) (Clostridium acetobutylicum).